The sequence spans 188 residues: Trafficking protein particle complex subunit 5 (188 aa).

S10 is subject to Phosphoserine.

Belongs to the TRAPP small subunits family. BET3 subfamily. Component of the multisubunit TRAPP (transport protein particle) complex, which includes at least TRAPPC2, TRAPPC2L, TRAPPC3, TRAPPC3L, TRAPPC4, TRAPPC5, TRAPPC8, TRAPPC9, TRAPPC10, TRAPPC11 and TRAPPC12.

The protein resides in the golgi apparatus. It is found in the cis-Golgi network. The protein localises to the endoplasmic reticulum. Its function is as follows. May play a role in vesicular transport from endoplasmic reticulum to Golgi. This Mus musculus (Mouse) protein is Trafficking protein particle complex subunit 5 (Trappc5).